Here is a 283-residue protein sequence, read N- to C-terminus: Extensin (283 aa).

An N-terminal signal peptide occupies residues 1 to 24; that stretch reads MMGGKAALLLALVAVTLAVVEIQA. A disordered region spans residues 27 to 283; the sequence is GYGYGGGYPT…PPPPPPPPYY (257 aa). Over residues 36–45 the composition is skewed to pro residues; sequence TPTPKPPAKG. Positions 46–69 are enriched in basic and acidic residues; sequence PKPEKPPTKGHGHKPEKPPKEHKP. Pro residues-rich tracts occupy residues 70 to 264 and 272 to 283; these read TPPT…PTYT and SSPPPPPPPPYY.

In terms of processing, hydroxylated on proline residues in the S-P-P-P-P repeat. Post-translationally, O-glycosylated on hydroxyprolines.

The protein resides in the secreted. It is found in the primary cell wall. In terms of biological role, structural component in primary cell wall. The protein is Extensin (HRGP) of Sorghum bicolor (Sorghum).